The primary structure comprises 111 residues: uncharacterized protein (111 aa).

Residues 3 to 29 (RKITSYKTSLQGLREENEDVELMNLNL) adopt a coiled-coil conformation. The 106-residue stretch at 6–111 (TSYKTSLQGL…TWWMYCSSYY (106 aa)) folds into the PPM-type phosphatase domain.

This is an uncharacterized protein from Acanthamoeba polyphaga mimivirus (APMV).